A 176-amino-acid polypeptide reads, in one-letter code: Nudix hydrolase 18, mitochondrial (176 aa).

A mitochondrion-targeting transit peptide spans 1 to 21 (MVCLVSRTGRQSQRYNKGRRQ). The Nudix hydrolase domain maps to 22–153 (VVGCIPYRLK…WMKEALDVLV (132 aa)). The Nudix box motif lies at 60-81 (GGWELDESVEEAASRESLEEAG). Positions 75 and 79 each coordinate Mg(2+).

It belongs to the Nudix hydrolase family. The cofactor is Mg(2+). It depends on Mn(2+) as a cofactor. Expressed in roots, stems and inflorescences.

The protein resides in the mitochondrion. Probably mediates the hydrolysis of some nucleoside diphosphate derivatives. The sequence is that of Nudix hydrolase 18, mitochondrial (NUDT18) from Arabidopsis thaliana (Mouse-ear cress).